The following is a 352-amino-acid chain: Uroporphyrinogen decarboxylase (352 aa).

Residues 26–30 (RQAGR), D76, Y153, S208, and H323 contribute to the substrate site.

The protein belongs to the uroporphyrinogen decarboxylase family. Homodimer.

It is found in the cytoplasm. The catalysed reaction is uroporphyrinogen III + 4 H(+) = coproporphyrinogen III + 4 CO2. Its pathway is porphyrin-containing compound metabolism; protoporphyrin-IX biosynthesis; coproporphyrinogen-III from 5-aminolevulinate: step 4/4. Functionally, catalyzes the decarboxylation of four acetate groups of uroporphyrinogen-III to yield coproporphyrinogen-III. The sequence is that of Uroporphyrinogen decarboxylase from Prochlorococcus marinus (strain MIT 9303).